We begin with the raw amino-acid sequence, 158 residues long: Transcription elongation factor GreA (158 aa).

Belongs to the GreA/GreB family.

Functionally, necessary for efficient RNA polymerase transcription elongation past template-encoded arresting sites. The arresting sites in DNA have the property of trapping a certain fraction of elongating RNA polymerases that pass through, resulting in locked ternary complexes. Cleavage of the nascent transcript by cleavage factors such as GreA or GreB allows the resumption of elongation from the new 3'terminus. GreA releases sequences of 2 to 3 nucleotides. The chain is Transcription elongation factor GreA from Wigglesworthia glossinidia brevipalpis.